We begin with the raw amino-acid sequence, 339 residues long: Transposase for insertion sequence element IS1086 (339 aa).

Residues 176–329 (DRLMPGHWEG…SPLQVLAQVL (154 aa)) enclose the Integrase catalytic domain.

This sequence belongs to the transposase IS30 family.

In terms of biological role, required for the transposition of the insertion element. The sequence is that of Transposase for insertion sequence element IS1086 (IS1086) from Cupriavidus metallidurans (strain ATCC 43123 / DSM 2839 / NBRC 102507 / CH34) (Ralstonia metallidurans).